The sequence spans 539 residues: MSVKGITPQELAAYGIHNVSEIVYNPSYDLLFQEETKPTLEGYERGTLTNTGAIAVDTGIFTGRSPKDKYIVRDAITQDTVWWADQGKGKNDNKPLSQETWTHLKGLVTNQLSGKRLFVVDTFCGANADTRLQVRFVTEVAWQAHFVKNMFIRPTDEELAHFEPDFIVMNGAKCINPNWKEQGLNSENFVAFNLTERMQLIGGTWYGGEMKKGMFSMMNYLLPLKGIASMHCSANVGEKGDVAIFFGLSGTGKTTLSTDPKRKLIGDDEHGWDDDGVFNFEGGCYAKTIKLSEEAEPDIYHAIKRDALLENVVVLPDGTVDFNDGSKTENTRVSYPIYHIENIVKPVSKAGHATKVIFLTADAFGVLPPVSRLTANQTQYHFLSGFTAKLAGTERGVTEPTPTFSACFGAAFLSLHPTQYAEVLVKRMQAVGAQAYLVNTGWNGTGKRISIKDTRAIIDAILNGEIDKAETFTLPIFDLAVPMALPGVDPAILDPRDTYADVAQWQEKAEDLAKRFTTNFDKYTDTPAGAALVSAGPKI.

Substrate is bound by residues R64, Y206, and K212. Residues K212, H231, and 247–255 (GLSGTGKTT) each bind ATP. 2 residues coordinate Mn(2+): K212 and H231. D268 contributes to the Mn(2+) binding site. Residues E296, R332, 448-449 (RI), and T454 contribute to the ATP site. R332 serves as a coordination point for substrate.

It belongs to the phosphoenolpyruvate carboxykinase (ATP) family. As to quaternary structure, monomer. Requires Mn(2+) as cofactor.

Its subcellular location is the cytoplasm. The enzyme catalyses oxaloacetate + ATP = phosphoenolpyruvate + ADP + CO2. The protein operates within carbohydrate biosynthesis; gluconeogenesis. Its function is as follows. Involved in the gluconeogenesis. Catalyzes the conversion of oxaloacetate (OAA) to phosphoenolpyruvate (PEP) through direct phosphoryl transfer between the nucleoside triphosphate and OAA. The polypeptide is Phosphoenolpyruvate carboxykinase (ATP) (Yersinia enterocolitica serotype O:8 / biotype 1B (strain NCTC 13174 / 8081)).